The following is a 1372-amino-acid chain: DNA-directed RNA polymerase subunit beta (1372 aa).

The protein belongs to the RNA polymerase beta chain family. In terms of assembly, the RNAP catalytic core consists of 2 alpha, 1 beta, 1 beta' and 1 omega subunit. When a sigma factor is associated with the core the holoenzyme is formed, which can initiate transcription.

It carries out the reaction RNA(n) + a ribonucleoside 5'-triphosphate = RNA(n+1) + diphosphate. DNA-dependent RNA polymerase catalyzes the transcription of DNA into RNA using the four ribonucleoside triphosphates as substrates. The protein is DNA-directed RNA polymerase subunit beta of Psychrobacter cryohalolentis (strain ATCC BAA-1226 / DSM 17306 / VKM B-2378 / K5).